A 341-amino-acid polypeptide reads, in one-letter code: HTH-type transcriptional repressor PurR (341 aa).

Positions Ala2–Val56 constitute an HTH lacI-type domain. Positions Ile4–Asn23 form a DNA-binding region, H-T-H motif. The DNA-binding element occupies Ser48–Val56. Residues Tyr73, Arg190, Thr192, Phe221, and Asp275 each coordinate hypoxanthine.

Homodimer.

It functions in the pathway purine metabolism; purine nucleotide biosynthesis [regulation]. Functionally, is the main repressor of the genes involved in the de novo synthesis of purine nucleotides, regulating purB, purC, purEK, purF, purHD, purL, purMN and guaBA expression. PurR is allosterically activated to bind its cognate DNA by binding the purine corepressors, hypoxanthine or guanine, thereby effecting transcription repression. This chain is HTH-type transcriptional repressor PurR, found in Pectobacterium carotovorum subsp. carotovorum (strain PC1).